Consider the following 450-residue polypeptide: Probable 1,4-beta-D-glucan cellobiohydrolase C (450 aa).

A signal peptide spans 1–19; it reads MKHLASSIALTLLLPAVQA. One can recognise a CBM1 domain in the interval 20–55; the sequence is QQTVWGQCGGQGWSGPTNCVAGAACSTLNPYYAQCI. 2 disulfide bridges follow: Cys-27/Cys-44 and Cys-38/Cys-54. The thr-rich linker stretch occupies residues 59-90; it reads TATSTTLSTTTTTQTTTKPTTTGPTTSAPTVT. A disordered region spans residues 63–89; the sequence is TTLSTTTTTQTTTKPTTTGPTTSAPTV. The catalytic stretch occupies residues 91-450; it reads ASGNPFSGYQ…QLLTNANPSF (360 aa). Asp-180 is an active-site residue. 2 disulfides stabilise this stretch: Cys-181–Cys-240 and Cys-372–Cys-419. Residue Asp-226 is the Proton donor of the active site. The active-site Nucleophile is the Asp-405. Residue Asn-409 is glycosylated (N-linked (GlcNAc...) asparagine).

This sequence belongs to the glycosyl hydrolase 6 (cellulase B) family.

The protein resides in the secreted. The catalysed reaction is Hydrolysis of (1-&gt;4)-beta-D-glucosidic linkages in cellulose and cellotetraose, releasing cellobiose from the non-reducing ends of the chains.. The biological conversion of cellulose to glucose generally requires three types of hydrolytic enzymes: (1) Endoglucanases which cut internal beta-1,4-glucosidic bonds; (2) Exocellobiohydrolases that cut the disaccharide cellobiose from the non-reducing end of the cellulose polymer chain; (3) Beta-1,4-glucosidases which hydrolyze the cellobiose and other short cello-oligosaccharides to glucose. In Neosartorya fischeri (strain ATCC 1020 / DSM 3700 / CBS 544.65 / FGSC A1164 / JCM 1740 / NRRL 181 / WB 181) (Aspergillus fischerianus), this protein is Probable 1,4-beta-D-glucan cellobiohydrolase C (cbhC).